A 1062-amino-acid polypeptide reads, in one-letter code: Roc-COR-CHAT protease (1062 aa).

LRR repeat units lie at residues 70-94, 95-116, 115-141, 142-159, 160-180, 181-203, 204-226, and 228-249; these read LAGL…HLQQ, LRLL…GSMP, MPLL…ALQK, LDVS…SACP, ALWW…MPAG, FKAL…NGKL, PKLV…LLLP, and GLET…IRGS. In terms of domain architecture, COR spans 470–660; that stretch reads DWLGVMEELQ…GLMWKDNVVF (191 aa). Residues 836–856 form a disordered region; sequence ERDNDHTGLSDSSDQEDETFT. Residues histidine 931 and cysteine 980 contribute to the active site.

A dedicated protease for substrate gasdermin bGSDM; cleaves the bGSDM precursor, releasing the pore-forming moiety, which integrates into the membrane and triggers cell death. Probably involved in defense against bacteriophages. Expression of bGSDM and this neighboring protease is highly toxic in E.coli. This chain is Roc-COR-CHAT protease, found in Unknown prokaryotic organism.